The primary structure comprises 419 residues: UDP-N-acetylglucosamine 1-carboxyvinyltransferase (419 aa).

22-23 (KN) provides a ligand contact to phosphoenolpyruvate. Arginine 91 is a binding site for UDP-N-acetyl-alpha-D-glucosamine. The active-site Proton donor is cysteine 115. Cysteine 115 carries the 2-(S-cysteinyl)pyruvic acid O-phosphothioketal modification. UDP-N-acetyl-alpha-D-glucosamine is bound by residues 120–124 (RPVDL), 160–163 (KVSV), aspartate 305, and valine 327.

It belongs to the EPSP synthase family. MurA subfamily.

The protein localises to the cytoplasm. It carries out the reaction phosphoenolpyruvate + UDP-N-acetyl-alpha-D-glucosamine = UDP-N-acetyl-3-O-(1-carboxyvinyl)-alpha-D-glucosamine + phosphate. The protein operates within cell wall biogenesis; peptidoglycan biosynthesis. In terms of biological role, cell wall formation. Adds enolpyruvyl to UDP-N-acetylglucosamine. This chain is UDP-N-acetylglucosamine 1-carboxyvinyltransferase, found in Salmonella arizonae (strain ATCC BAA-731 / CDC346-86 / RSK2980).